The chain runs to 69 residues: uncharacterized protein (69 aa).

The region spanning 5 to 60 is the HTH cro/C1-type domain; it reads IREHRKELGLTQEELAERVGVTRQTIIALEKGRYSPSLILAHRIARALGREHIEDI. A DNA-binding region (H-T-H motif) is located at residues 16–35; that stretch reads QEELAERVGVTRQTIIALEK.

This is an uncharacterized protein from Methanothermobacter thermautotrophicus (strain ATCC 29096 / DSM 1053 / JCM 10044 / NBRC 100330 / Delta H) (Methanobacterium thermoautotrophicum).